The primary structure comprises 339 residues: GDP-fucose transporter 1 (339 aa).

Helical transmembrane passes span 9–29 (SVRIAAVVAAYWTISISLVFL), 45–65 (LFVTWYQCVVTVICLFFLSLL), 82–102 (LSVAKQVLPLSAVFVGMITFN), 111–133 (VSFYNVGRSLTTVFNVICTYVIL), 136–156 (STSYKAVICCAVIIGGFLMGV), 165–185 (ISYSGVLFGVLASLCVSLNAI), 209–229 (ACFLFLPLMALLGEIGEVAHF), and 237–257 (FWLMMTIGGVFGIAIGYITGL). The segment at 319-339 (AHTIQASKDDKALQEDGQTKV) is disordered. Residues 325–339 (SKDDKALQEDGQTKV) are compositionally biased toward basic and acidic residues.

It belongs to the TPT transporter family. SLC35C subfamily.

The protein resides in the golgi apparatus membrane. The catalysed reaction is GMP(out) + GDP-beta-L-fucose(in) = GMP(in) + GDP-beta-L-fucose(out). Its function is as follows. Antiporter specific for GDP-l-fucose and depending on the concomitant reverse transport of GMP. Involved in GDP-fucose import from the cytoplasm into the Golgi lumen. This Nematostella vectensis (Starlet sea anemone) protein is GDP-fucose transporter 1 (slc35c1).